The primary structure comprises 325 residues: Cytochrome c1, heme protein, mitochondrial (325 aa).

The N-terminal 84 residues, 1 to 84 (MAAAAASLRG…AMALHSAVSA (84 aa)), are a transit peptide targeting the mitochondrion. The Mitochondrial intermembrane portion of the chain corresponds to 85 to 281 (SDLELHPPSY…TFLRWASEPE (197 aa)). Residues 108 to 209 (TSIRRGFQVY…IVRARHGGED (102 aa)) enclose the Cytochrome c domain. Heme c-binding residues include Cys121, Cys124, and His125. A Phosphoserine modification is found at Ser182. Residue Met244 participates in heme c binding. Residues 282 to 315 (HDHRKRMGLKMLMMMALLVPLVYTIKRHKWSVLK) traverse the membrane as a helical segment. At 316-325 (SRKLAYRPPK) the chain is on the mitochondrial matrix side.

It belongs to the cytochrome c family. As to quaternary structure, component of the ubiquinol-cytochrome c oxidoreductase (cytochrome b-c1 complex, complex III, CIII), a multisubunit enzyme composed of 11 subunits. The complex is composed of 3 respiratory subunits cytochrome b, cytochrome c1 and Rieske protein UQCRFS1, 2 core protein subunits UQCRC1/QCR1 and UQCRC2/QCR2, and 6 low-molecular weight protein subunits UQCRH/QCR6, UQCRB/QCR7, UQCRQ/QCR8, UQCR10/QCR9, UQCR11/QCR10 and subunit 9, the cleavage product of Rieske protein UQCRFS1. The complex exists as an obligatory dimer and forms supercomplexes (SCs) in the inner mitochondrial membrane with NADH-ubiquinone oxidoreductase (complex I, CI) and cytochrome c oxidase (complex IV, CIV), resulting in different assemblies (supercomplex SCI(1)III(2)IV(1) and megacomplex MCI(2)III(2)IV(2)). Interacts with FLVCR2; this interaction occurs in the absence of heme and is disrupted upon heme binding. The cofactor is heme c.

The protein resides in the mitochondrion inner membrane. It catalyses the reaction a quinol + 2 Fe(III)-[cytochrome c](out) = a quinone + 2 Fe(II)-[cytochrome c](out) + 2 H(+)(out). In terms of biological role, component of the ubiquinol-cytochrome c oxidoreductase, a multisubunit transmembrane complex that is part of the mitochondrial electron transport chain which drives oxidative phosphorylation. The respiratory chain contains 3 multisubunit complexes succinate dehydrogenase (complex II, CII), ubiquinol-cytochrome c oxidoreductase (cytochrome b-c1 complex, complex III, CIII) and cytochrome c oxidase (complex IV, CIV), that cooperate to transfer electrons derived from NADH and succinate to molecular oxygen, creating an electrochemical gradient over the inner membrane that drives transmembrane transport and the ATP synthase. The cytochrome b-c1 complex catalyzes electron transfer from ubiquinol to cytochrome c, linking this redox reaction to translocation of protons across the mitochondrial inner membrane, with protons being carried across the membrane as hydrogens on the quinol. In the process called Q cycle, 2 protons are consumed from the matrix, 4 protons are released into the intermembrane space and 2 electrons are passed to cytochrome c. Cytochrome c1 is a catalytic core subunit containing a c-type heme. It transfers electrons from the [2Fe-2S] iron-sulfur cluster of the Rieske protein to cytochrome c. The sequence is that of Cytochrome c1, heme protein, mitochondrial (CYC1) from Homo sapiens (Human).